Reading from the N-terminus, the 295-residue chain is 33 kDa chaperonin (295 aa).

Disulfide bonds link cysteine 237-cysteine 239 and cysteine 270-cysteine 273.

It belongs to the HSP33 family. Post-translationally, under oxidizing conditions two disulfide bonds are formed involving the reactive cysteines. Under reducing conditions zinc is bound to the reactive cysteines and the protein is inactive.

The protein resides in the cytoplasm. In terms of biological role, redox regulated molecular chaperone. Protects both thermally unfolding and oxidatively damaged proteins from irreversible aggregation. Plays an important role in the bacterial defense system toward oxidative stress. The protein is 33 kDa chaperonin of Lactiplantibacillus plantarum (strain ATCC BAA-793 / NCIMB 8826 / WCFS1) (Lactobacillus plantarum).